A 391-amino-acid polypeptide reads, in one-letter code: Nutrient and stress factor 1 (391 aa).

Positions 1-27 (MENTTNRNTAGVLTSSNGNFATNSVAA) are enriched in polar residues. Positions 1 to 37 (MENTTNRNTAGVLTSSNGNFATNSVAASTPKRSKSAR) are disordered. 2 C2H2-type zinc fingers span residues 41 to 66 (FKCT…IRKH) and 72 to 95 (FQCP…ESVH). The interval 91–149 (RESVHAHKNHHSTSSHQRKPSSSSLSSSSSASSSSSASSSTSYSDPYRKTNINSGNMPM) is disordered. Residues 96–109 (AHKNHHSTSSHQRK) show a composition bias toward basic residues. Residues 110–134 (PSSSSLSSSSSASSSSSASSSTSYS) are compositionally biased toward low complexity. Phosphoserine occurs at positions 162 and 163. The disordered stretch occupies residues 326–374 (AFSQPPNGNKNNNMSSSKNGGKGGENFKNTDDRNDNNNKKRSETLSESD). Over residues 332–344 (NGNKNNNMSSSKN) the composition is skewed to low complexity. The span at 353–369 (KNTDDRNDNNNKKRSET) shows a compositional bias: basic and acidic residues.

It localises to the nucleus. Its function is as follows. Transcription factor that participates in the transcriptional activation of glucose-repressed genes during exponential growth in non-fermentable carbon conditions. Also involved in salt-stress response. This chain is Nutrient and stress factor 1 (USV1), found in Saccharomyces cerevisiae (strain ATCC 204508 / S288c) (Baker's yeast).